Reading from the N-terminus, the 34-residue chain is Cytochrome c oxidase polypeptide 2A (34 aa).

Residue methionine 1 is modified to N-formylmethionine. Residues 4–34 (KPKGALAVILVLTLTILVFWLGVYAVFFARG) traverse the membrane as a helical segment.

The protein resides in the cell membrane. It catalyses the reaction 4 Fe(II)-[cytochrome c] + O2 + 8 H(+)(in) = 4 Fe(III)-[cytochrome c] + 2 H2O + 4 H(+)(out). The protein is Cytochrome c oxidase polypeptide 2A (cbaD) of Thermus thermophilus (strain ATCC 27634 / DSM 579 / HB8).